Reading from the N-terminus, the 152-residue chain is Ribosome maturation factor RimP (152 aa).

Belongs to the RimP family.

It localises to the cytoplasm. Required for maturation of 30S ribosomal subunits. The sequence is that of Ribosome maturation factor RimP from Citrobacter koseri (strain ATCC BAA-895 / CDC 4225-83 / SGSC4696).